The primary structure comprises 705 residues: Prolyl endopeptidase (705 aa).

The signal sequence occupies residues 1-20; the sequence is MKYKKLSVAVAAFAFAAVSA. Residues Ser-556 and His-675 each act as charge relay system in the active site.

It belongs to the peptidase S9A family. Monomer.

It is found in the periplasm. It carries out the reaction Hydrolysis of Pro-|-Xaa &gt;&gt; Ala-|-Xaa in oligopeptides.. In terms of biological role, cleaves peptide bonds on the C-terminal side of prolyl residues within peptides that are up to approximately 30 amino acids long. Has an absolute requirement for an X-Pro bond in the trans configuration immediately preceding the Pro-Y scissible bond. The protein is Prolyl endopeptidase of Elizabethkingia miricola (Chryseobacterium miricola).